We begin with the raw amino-acid sequence, 355 residues long: Holliday junction branch migration complex subunit RuvB (355 aa).

Positions 4–190 (TDKLAAERII…FGIVARLEFY (187 aa)) are large ATPase domain (RuvB-L). ATP-binding positions include leucine 29, arginine 30, glycine 71, lysine 74, threonine 75, threonine 76, 137–139 (EDY), arginine 180, tyrosine 190, and arginine 227. Residue threonine 75 participates in Mg(2+) binding. A small ATPAse domain (RuvB-S) region spans residues 191-261 (DADQLSRIVQ…IADAALAMLD (71 aa)). The segment at 264-355 (PVGFDLMDRK…QSIWDTPDAQ (92 aa)) is head domain (RuvB-H). Arginine 300, arginine 319, and arginine 324 together coordinate DNA.

This sequence belongs to the RuvB family. Homohexamer. Forms an RuvA(8)-RuvB(12)-Holliday junction (HJ) complex. HJ DNA is sandwiched between 2 RuvA tetramers; dsDNA enters through RuvA and exits via RuvB. An RuvB hexamer assembles on each DNA strand where it exits the tetramer. Each RuvB hexamer is contacted by two RuvA subunits (via domain III) on 2 adjacent RuvB subunits; this complex drives branch migration. In the full resolvosome a probable DNA-RuvA(4)-RuvB(12)-RuvC(2) complex forms which resolves the HJ.

It is found in the cytoplasm. The catalysed reaction is ATP + H2O = ADP + phosphate + H(+). Functionally, the RuvA-RuvB-RuvC complex processes Holliday junction (HJ) DNA during genetic recombination and DNA repair, while the RuvA-RuvB complex plays an important role in the rescue of blocked DNA replication forks via replication fork reversal (RFR). RuvA specifically binds to HJ cruciform DNA, conferring on it an open structure. The RuvB hexamer acts as an ATP-dependent pump, pulling dsDNA into and through the RuvAB complex. RuvB forms 2 homohexamers on either side of HJ DNA bound by 1 or 2 RuvA tetramers; 4 subunits per hexamer contact DNA at a time. Coordinated motions by a converter formed by DNA-disengaged RuvB subunits stimulates ATP hydrolysis and nucleotide exchange. Immobilization of the converter enables RuvB to convert the ATP-contained energy into a lever motion, pulling 2 nucleotides of DNA out of the RuvA tetramer per ATP hydrolyzed, thus driving DNA branch migration. The RuvB motors rotate together with the DNA substrate, which together with the progressing nucleotide cycle form the mechanistic basis for DNA recombination by continuous HJ branch migration. Branch migration allows RuvC to scan DNA until it finds its consensus sequence, where it cleaves and resolves cruciform DNA. The protein is Holliday junction branch migration complex subunit RuvB of Burkholderia multivorans (strain ATCC 17616 / 249).